A 231-amino-acid polypeptide reads, in one-letter code: Large ribosomal subunit protein uL1 (231 aa).

This sequence belongs to the universal ribosomal protein uL1 family. As to quaternary structure, part of the 50S ribosomal subunit.

Its function is as follows. Binds directly to 23S rRNA. The L1 stalk is quite mobile in the ribosome, and is involved in E site tRNA release. Functionally, protein L1 is also a translational repressor protein, it controls the translation of the L11 operon by binding to its mRNA. The polypeptide is Large ribosomal subunit protein uL1 (Ralstonia pickettii (strain 12J)).